An 87-amino-acid polypeptide reads, in one-letter code: Small ribosomal subunit protein bS20 (87 aa).

This sequence belongs to the bacterial ribosomal protein bS20 family.

Its function is as follows. Binds directly to 16S ribosomal RNA. This Halothermothrix orenii (strain H 168 / OCM 544 / DSM 9562) protein is Small ribosomal subunit protein bS20.